We begin with the raw amino-acid sequence, 449 residues long: uncharacterized protein (449 aa).

Its subcellular location is the mitochondrion. This is an uncharacterized protein from Podospora anserina (strain S / ATCC MYA-4624 / DSM 980 / FGSC 10383) (Pleurage anserina).